The following is a 173-amino-acid chain: Crossover junction endodeoxyribonuclease RuvC (173 aa).

Residues Asp-8, Glu-67, and Asp-139 contribute to the active site. 3 residues coordinate Mg(2+): Asp-8, Glu-67, and Asp-139.

Belongs to the RuvC family. As to quaternary structure, homodimer which binds Holliday junction (HJ) DNA. The HJ becomes 2-fold symmetrical on binding to RuvC with unstacked arms; it has a different conformation from HJ DNA in complex with RuvA. In the full resolvosome a probable DNA-RuvA(4)-RuvB(12)-RuvC(2) complex forms which resolves the HJ. The cofactor is Mg(2+).

The protein localises to the cytoplasm. The catalysed reaction is Endonucleolytic cleavage at a junction such as a reciprocal single-stranded crossover between two homologous DNA duplexes (Holliday junction).. In terms of biological role, the RuvA-RuvB-RuvC complex processes Holliday junction (HJ) DNA during genetic recombination and DNA repair. Endonuclease that resolves HJ intermediates. Cleaves cruciform DNA by making single-stranded nicks across the HJ at symmetrical positions within the homologous arms, yielding a 5'-phosphate and a 3'-hydroxyl group; requires a central core of homology in the junction. The consensus cleavage sequence is 5'-(A/T)TT(C/G)-3'. Cleavage occurs on the 3'-side of the TT dinucleotide at the point of strand exchange. HJ branch migration catalyzed by RuvA-RuvB allows RuvC to scan DNA until it finds its consensus sequence, where it cleaves and resolves the cruciform DNA. The chain is Crossover junction endodeoxyribonuclease RuvC from Klebsiella pneumoniae subsp. pneumoniae (strain ATCC 700721 / MGH 78578).